A 1184-amino-acid polypeptide reads, in one-letter code: Nucleolar protein 6 (1184 aa).

A compositionally biased stretch (basic and acidic residues) spans 1 to 10 (MGRIKEKESK). Disordered regions lie at residues 1 to 42 (MGRI…NRVP) and 1133 to 1184 (REQR…NALC).

It belongs to the NRAP family. Part of the small subunit (SSU) processome, composed of more than 70 proteins and the RNA chaperone small nucleolar RNA (snoRNA) U3.

It is found in the nucleus. Its subcellular location is the nucleolus. It localises to the chromosome. In terms of biological role, part of the small subunit (SSU) processome, first precursor of the small eukaryotic ribosomal subunit. During the assembly of the SSU processome in the nucleolus, many ribosome biogenesis factors, an RNA chaperone and ribosomal proteins associate with the nascent pre-rRNA and work in concert to generate RNA folding, modifications, rearrangements and cleavage as well as targeted degradation of pre-ribosomal RNA by the RNA exosome. The sequence is that of Nucleolar protein 6 from Drosophila virilis (Fruit fly).